Reading from the N-terminus, the 588-residue chain is Pectinesterase 4 (588 aa).

An N-terminal signal peptide occupies residues 1–24 (MIGKVVVSVASILLIVGVAIGVVA). N-linked (GlcNAc...) asparagine glycans are attached at residues Asn86, Asn206, and Asn342. 2 residues coordinate substrate: Thr353 and Gln383. Asp406 serves as the catalytic Proton donor. Asp427 acts as the Nucleophile in catalysis. The substrate site is built by Arg496 and Trp498.

This sequence in the N-terminal section; belongs to the PMEI family. It in the C-terminal section; belongs to the pectinesterase family. In terms of tissue distribution, expressed in pollen grains and pollen tubes.

It localises to the secreted. Its subcellular location is the cell wall. The catalysed reaction is [(1-&gt;4)-alpha-D-galacturonosyl methyl ester](n) + n H2O = [(1-&gt;4)-alpha-D-galacturonosyl](n) + n methanol + n H(+). The protein operates within glycan metabolism; pectin degradation; 2-dehydro-3-deoxy-D-gluconate from pectin: step 1/5. Functionally, acts in the modification of cell walls via demethylesterification of cell wall pectin. Plays an important role in growth of pollen tubes in female floral tissues, possibly via enhancing the interaction between the pollen tube and female floral tissues by modification of the cell walls. In Arabidopsis thaliana (Mouse-ear cress), this protein is Pectinesterase 4 (PME4).